We begin with the raw amino-acid sequence, 62 residues long: AEGCDRRFSASDELTRHIRIHTGHKPFQCAICMRNFSRSDHLTTHIRTHTGEKPFACDYCGR.

3 C2H2-type zinc fingers span residues 1-21 (AEGC…IRIH), 27-49 (FQCA…IRTH), and 55-62 (FACDYCGR).

The protein belongs to the EGR C2H2-type zinc-finger protein family. Interacts with HCFC1. Interacts with WWP2. Interacts with UBC9. Interacts with CITED1. Interacts (via phosphorylated form) with SFN. Ubiquitinated by WWP2 leading to proteasomal degradation. In terms of processing, acetylated. May be deacetylated by HDAC6, HDAC10 or SIRT1.

Its subcellular location is the nucleus. The protein operates within protein modification; protein sumoylation. In terms of biological role, sequence-specific DNA-binding transcription factor. Plays a role in hindbrain segmentation by regulating the expression of a subset of homeobox containing genes and in Schwann cell myelination by regulating the expression of genes involved in the formation and maintenance of myelin. Binds to two EGR2-consensus sites EGR2A (5'-CTGTAGGAG-3') and EGR2B (5'-ATGTAGGTG-3') in the HOXB3 enhancer and promotes HOXB3 transcriptional activation. Binds to specific DNA sites located in the promoter region of HOXA4, HOXB2 and ERBB2. Regulates hindbrain segmentation by controlling the expression of Hox genes, such as HOXA4, HOXB3 and HOXB2, and thereby specifying odd and even rhombomeres. Promotes the expression of HOXB3 in the rhombomere r5 in the hindbrain. Regulates myelination in the peripheral nervous system after birth, possibly by regulating the expression of myelin proteins, such as MPZ, and by promoting the differentiation of Schwann cells. Involved in the development of the jaw openener musculature, probably by playing a role in its innervation through trigeminal motor neurons. May play a role in adipogenesis, possibly by regulating the expression of CEBPB. E3 SUMO-protein ligase helping SUMO1 conjugation to its coregulators NAB1 and NAB2, whose sumoylation down-regulates EGR2 transcriptional activity. In Cerdocyon thous (Crab-eating fox), this protein is E3 SUMO-protein ligase EGR2 (EGR2).